Consider the following 664-residue polypeptide: Alkaline/neutral invertase C, mitochondrial (664 aa).

Residues serine 41, serine 125, and serine 657 each carry the phosphoserine modification.

The protein belongs to the glycosyl hydrolase 100 family. Expressed in seedlings, roots and flowers.

The protein localises to the mitochondrion. It carries out the reaction Hydrolysis of terminal non-reducing beta-D-fructofuranoside residues in beta-D-fructofuranosides.. Mitochondrial invertase that cleaves sucrose into glucose and fructose and is involved in the regulation of aerial tissue development and floral transition. May be modulating hormone balance in relation to the radicle emergence. The sequence is that of Alkaline/neutral invertase C, mitochondrial from Arabidopsis thaliana (Mouse-ear cress).